The primary structure comprises 471 residues: Serine/threonine-protein kinase sid1 (471 aa).

In terms of domain architecture, Protein kinase spans 9–260 (YTLLRKLGSG…AKELLQHPFI (252 aa)). ATP-binding positions include 15-23 (LGSGSFGVV) and lysine 38. Aspartate 129 functions as the Proton acceptor in the catalytic mechanism.

It belongs to the protein kinase superfamily. STE Ser/Thr protein kinase family. STE20 subfamily. Interacts with cdc14.

It is found in the cytoplasm. The protein resides in the cytoskeleton. It localises to the microtubule organizing center. Its subcellular location is the spindle pole body. The catalysed reaction is L-seryl-[protein] + ATP = O-phospho-L-seryl-[protein] + ADP + H(+). It catalyses the reaction L-threonyl-[protein] + ATP = O-phospho-L-threonyl-[protein] + ADP + H(+). Has a role in the septation initiation network (SIN) required for cytokinesis. This chain is Serine/threonine-protein kinase sid1 (sid1), found in Schizosaccharomyces pombe (strain 972 / ATCC 24843) (Fission yeast).